A 104-amino-acid chain; its full sequence is Protein U9 (104 aa).

Residues 37 to 54 traverse the membrane as a helical segment; sequence GVQGLNADCSYVKSQCIK.

It is found in the host membrane. The chain is Protein U9 (U9) from Human herpesvirus 6B (HHV-6 variant B).